The following is a 127-amino-acid chain: Small ribosomal subunit protein bS6 (127 aa).

Residues 99-127 form a disordered region; sequence PSPMMKEEKSKSMMPGDAAPAAPAETAAA. Residues 110–127 are compositionally biased toward low complexity; it reads SMMPGDAAPAAPAETAAA.

The protein belongs to the bacterial ribosomal protein bS6 family.

Binds together with bS18 to 16S ribosomal RNA. In Dechloromonas aromatica (strain RCB), this protein is Small ribosomal subunit protein bS6.